A 215-amino-acid polypeptide reads, in one-letter code: MNQSILSPFGNTAEERVLNAINAFKNGTGVLVLDDEDRENEGDLIFPAETITPEQMAKLIRYGSGIVCLCITDERCQQLDLPSMVEHNNSVNKTAFTVTIEAAKGVSTGVSAADRVTTIQTAIADNAVPTDLHRPGHVFPLRAVNGGVLTRRGHTEASVDLARLAGFKEAGVICEITNDDGTMARTPDIVEFAKKFGYSVLTIEDLVEYRLANNI.

D-ribulose 5-phosphate-binding positions include 38–39 (RE), Asp43, 151–155 (RRGHT), and Glu175. Residue Glu39 coordinates Mg(2+). Residue His154 participates in Mg(2+) binding.

This sequence belongs to the DHBP synthase family. In terms of assembly, homodimer. Requires Mg(2+) as cofactor. It depends on Mn(2+) as a cofactor.

The enzyme catalyses D-ribulose 5-phosphate = (2S)-2-hydroxy-3-oxobutyl phosphate + formate + H(+). It participates in cofactor biosynthesis; riboflavin biosynthesis; 2-hydroxy-3-oxobutyl phosphate from D-ribulose 5-phosphate: step 1/1. In terms of biological role, catalyzes the conversion of D-ribulose 5-phosphate to formate and 3,4-dihydroxy-2-butanone 4-phosphate. The protein is 3,4-dihydroxy-2-butanone 4-phosphate synthase of Haemophilus influenzae (strain PittGG).